Reading from the N-terminus, the 131-residue chain is MSIHISIIAPDRTVWDANAEEVILPSSTGQLGILKGHAPLLTALDIGVMRVRVDRDWTPIVLLGGFAEIENDELTILVNGAEEASQIDRDQAQRDLEEMTVKFNEATTNKERIEATQNLRKARARLQAVSA.

It belongs to the ATPase epsilon chain family. F-type ATPases have 2 components, CF(1) - the catalytic core - and CF(0) - the membrane proton channel. CF(1) has five subunits: alpha(3), beta(3), gamma(1), delta(1), epsilon(1). CF(0) has three main subunits: a, b and c.

The protein localises to the plastid. The protein resides in the chloroplast thylakoid membrane. Produces ATP from ADP in the presence of a proton gradient across the membrane. The chain is ATP synthase epsilon chain, chloroplastic from Guillardia theta (Cryptophyte).